A 552-amino-acid chain; its full sequence is Chaperonin GroEL (552 aa).

ATP contacts are provided by residues 30-33, K51, 87-91, G415, 479-481, and D495; these read TLGP, DGTTT, and NAA.

It belongs to the chaperonin (HSP60) family. As to quaternary structure, forms a cylinder of 14 subunits composed of two heptameric rings stacked back-to-back. Interacts with the co-chaperonin GroES.

The protein localises to the cytoplasm. The enzyme catalyses ATP + H2O + a folded polypeptide = ADP + phosphate + an unfolded polypeptide.. In terms of biological role, together with its co-chaperonin GroES, plays an essential role in assisting protein folding. The GroEL-GroES system forms a nano-cage that allows encapsulation of the non-native substrate proteins and provides a physical environment optimized to promote and accelerate protein folding. This chain is Chaperonin GroEL, found in Stutzerimonas stutzeri (Pseudomonas stutzeri).